A 397-amino-acid polypeptide reads, in one-letter code: Elongation factor Tu (397 aa).

The region spanning 10–207 (KPHVNIGTIG…AVDTYIEEPK (198 aa)) is the tr-type G domain. Residues 19-26 (GHVDHGKT) form a G1 region. GTP is bound at residue 19–26 (GHVDHGKT). A Mg(2+)-binding site is contributed by threonine 26. The G2 stretch occupies residues 60–64 (GITIN). The G3 stretch occupies residues 81 to 84 (DCPG). Residues 81–85 (DCPGH) and 136–139 (NKID) each bind GTP. The segment at 136–139 (NKID) is G4. The interval 177–179 (SAL) is G5.

It belongs to the TRAFAC class translation factor GTPase superfamily. Classic translation factor GTPase family. EF-Tu/EF-1A subfamily. As to quaternary structure, monomer.

The protein resides in the cytoplasm. The enzyme catalyses GTP + H2O = GDP + phosphate + H(+). In terms of biological role, GTP hydrolase that promotes the GTP-dependent binding of aminoacyl-tRNA to the A-site of ribosomes during protein biosynthesis. The chain is Elongation factor Tu from Metamycoplasma hominis (strain ATCC 23114 / DSM 25592 / NBRC 14850 / NCTC 10111 / PG21) (Mycoplasma hominis).